The primary structure comprises 141 residues: Small ribosomal subunit protein bS6 (141 aa).

Residues 110-141 (SRTKVSDQPAAVEAAEAPAAPAAQEESAPASA) are disordered. The segment covering 117 to 141 (QPAAVEAAEAPAAPAAQEESAPASA) has biased composition (low complexity).

Belongs to the bacterial ribosomal protein bS6 family.

Its function is as follows. Binds together with bS18 to 16S ribosomal RNA. The chain is Small ribosomal subunit protein bS6 from Acidobacterium capsulatum (strain ATCC 51196 / DSM 11244 / BCRC 80197 / JCM 7670 / NBRC 15755 / NCIMB 13165 / 161).